The primary structure comprises 309 residues: MIFAITFFMGITSTLAAVLEPMSYYQYTQFQAPLSWEDITGKGLKQALDSCQQSFQWQRWNCPSQDFVQKNSKPEENSPNREDVYVAAISMAAIVHTLTKDCANGVIAGCGCTENALNVPCAHEPTKALEQYEKHFGSGSGAIGHNRRVVGALLQRSLEQECRCKQPGAVQGECQEEECVAVLKPFEAIAQDLLQMYDDAIQLEGASSNLKIMWQNIPLDSLVFMQDSPNYCERDATGLWKGTRGRQCSKDGSGSLEERLSCQQLCRVCGYRVRSQHVRTERRCNCKLVWGFRLQCDVCVQLERQYSCY.

A signal peptide spans 1-16; sequence MIFAITFFMGITSTLA. 10 cysteine pairs are disulfide-bonded: cysteine 51-cysteine 62, cysteine 102-cysteine 110, cysteine 112-cysteine 121, cysteine 162-cysteine 179, cysteine 164-cysteine 174, cysteine 232-cysteine 269, cysteine 248-cysteine 262, cysteine 266-cysteine 308, cysteine 284-cysteine 299, and cysteine 286-cysteine 296.

It belongs to the Wnt family.

The protein resides in the secreted. The protein localises to the extracellular space. It is found in the extracellular matrix. In terms of biological role, binds as a ligand to a family of frizzled seven-transmembrane receptors and acts through a cascade of genes on the nucleus. The chain is Wnt inhibitor of Dorsal protein (wntD) from Drosophila melanogaster (Fruit fly).